The sequence spans 196 residues: uncharacterized protein (196 aa).

The first 27 residues, 1-27 (MSVLSRAVQLAFVALGLCLFFSNLVAA), serve as a signal peptide directing secretion.

The protein localises to the secreted. This is an uncharacterized protein from Arthroderma benhamiae (strain ATCC MYA-4681 / CBS 112371) (Trichophyton mentagrophytes).